We begin with the raw amino-acid sequence, 260 residues long: Putative hydro-lyase Dshi_0610 (260 aa).

This sequence belongs to the D-glutamate cyclase family.

This chain is Putative hydro-lyase Dshi_0610, found in Dinoroseobacter shibae (strain DSM 16493 / NCIMB 14021 / DFL 12).